A 181-amino-acid chain; its full sequence is Translation initiation factor IF-3, chloroplastic (181 aa).

This sequence belongs to the IF-3 family. As to quaternary structure, monomer.

Its subcellular location is the plastid. It is found in the chloroplast. In terms of biological role, IF-3 binds to the 30S ribosomal subunit and shifts the equilibrium between 70S ribosomes and their 50S and 30S subunits in favor of the free subunits, thus enhancing the availability of 30S subunits on which protein synthesis initiation begins. This Galdieria sulphuraria (Red alga) protein is Translation initiation factor IF-3, chloroplastic.